A 139-amino-acid chain; its full sequence is Trafficking protein particle complex subunit 2-like protein (139 aa).

It belongs to the TRAPP small subunits family. Sedlin subfamily. As to quaternary structure, component of the multisubunit TRAPP (transport protein particle) complex, which includes at least TRAPPC2, TRAPPC2L, TRAPPC3, TRAPPC3L, TRAPPC4, TRAPPC5, TRAPPC8, TRAPPC9, TRAPPC10, TRAPPC11 and TRAPPC12. Interacts with the heterodimer TRAPPC3-TRAPPC6A.

The protein resides in the cytoplasm. Its subcellular location is the perinuclear region. The protein localises to the endoplasmic reticulum. It localises to the golgi apparatus. Its function is as follows. May play a role in vesicular transport from endoplasmic reticulum to Golgi. The sequence is that of Trafficking protein particle complex subunit 2-like protein (Trappc2l) from Mus musculus (Mouse).